We begin with the raw amino-acid sequence, 307 residues long: MIDLDNIIERLYEKQLIAESVIAYLCSLAKEVLMQESNVVRLSTPITVVGDIHGQFDDLLEIFRIGGPCPYTNYLFLGDYVDRGYYSIETITLLICLKLRYPKRITLLRGNHESRGITQTYGFYSECLRKYGNANVWKYFTDIFDFLTLSATIDDTIFCVHGGLSPSIQHIDQILVLDRFREFPHEGPMADLVWSDPDPSVQEFSLSPRGAGFSFGEVIVTKFLEYNNMKHILRAHQLCSEGYQILFEKKLSTVWSAPNYCYRCANLASILQIDTDQSRFFNVFDAAPNQETPFVEPAAKVTAEYFL.

Residues Asp-51, His-53, Asp-79, and Asn-111 each contribute to the Mn(2+) site. His-112 acts as the Proton donor in catalysis. Residues His-161 and His-236 each contribute to the Mn(2+) site.

This sequence belongs to the PPP phosphatase family. PP-X subfamily. Mn(2+) serves as cofactor.

It carries out the reaction O-phospho-L-seryl-[protein] + H2O = L-seryl-[protein] + phosphate. The catalysed reaction is O-phospho-L-threonyl-[protein] + H2O = L-threonyl-[protein] + phosphate. This chain is Putative serine/threonine-protein phosphatase C22H10.04, found in Schizosaccharomyces pombe (strain 972 / ATCC 24843) (Fission yeast).